The sequence spans 183 residues: MSNSHHTSQGRRNKLSVWVKKIINTTTTTNASVSSSKPRRGTRAGPTRVKRAELDPDGTTISSSLRPLVDRNSLHSSESDDEGDRRVAWDEPPTGKVRQQQQQQQQQQNDNASVIPLVSFCSSSVKSSTFSDIHSIQSTRPTIFSNRTFETNSSVLAIPPQSILDRSRTLPPSNASNTTTRRP.

Residue Lys-21 forms a Glycyl lysine isopeptide (Lys-Gly) (interchain with G-Cter in ubiquitin) linkage. 2 disordered regions span residues 24–111 and 160–183; these read NTTT…QNDN and PQSI…TRRP. Residues 99–108 are compositionally biased toward low complexity; that stretch reads QQQQQQQQQQ. Over residues 170 to 183 the composition is skewed to polar residues; it reads LPPSNASNTTTRRP.

Its subcellular location is the cytoplasm. This is an uncharacterized protein from Saccharomyces cerevisiae (strain ATCC 204508 / S288c) (Baker's yeast).